Reading from the N-terminus, the 85-residue chain is U4-theraphotoxin-Hhn1a (85 aa).

The first 22 residues, 1–22 (MKVTLIAILTCAAVLVLHTTAA), serve as a signal peptide directing secretion. Residues 23–48 (EELEAEGQLMEVGMPDTELAAVDEER) constitute a propeptide that is removed on maturation. 3 cysteine pairs are disulfide-bonded: cysteine 52-cysteine 66, cysteine 56-cysteine 77, and cysteine 71-cysteine 82.

This sequence belongs to the neurotoxin 12 (Hwtx-2) family. 02 (Hwtx-2) subfamily. As to quaternary structure, monomer. Expressed by the venom gland.

The protein localises to the secreted. Functionally, neurotoxin active on both insects and mammals. The protein is U4-theraphotoxin-Hhn1a of Cyriopagopus hainanus (Chinese bird spider).